Here is a 972-residue protein sequence, read N- to C-terminus: MTSQGRTRTLLNLTPIRLIVALFLVAAAVGLSIGLTYYFTRKAFDTSEKPGKDDTGGKDKDNSPSAAELLLPSNIKPLSYDLTIKTYLPGYVDFPPEKNLTFDGRVEISMVVIEPTKSIVLNSKKISVIPQECELVSGDKKLEIESVKEHPRLEKVEFLIKSQLEKDQQILLKVGYIGLISNSFGGIYQTTYTTPDGTPKIAAVSQNEPIDARRMVPCMDEPKYKANWTVTVIHPKGTKAVSNGIEVNGDGEISGDWITSKFLTTPRMSSYLLAVMVSEFEYIEGETKTGVRFRIWSRPEAKKMTQYALQSGIKCIEFYEDFFDIRFPLKKQDMIALPDFSAGAMENWGLITYRENSLLYDDRFYAPMNKQRIARIVAHELAHQWFGDLVTMKWWDNLWLNEGFARFTEFIGAGQITQDDARMRNYFLIDVLERALKADSVASSHPLSFRIDKAAEVEEAFDDITYAKGASVLTMLRALIGEEKHKHAVSQYLKKFSYSNAEATDLWAVFDEVVTDVEGPDGKPMKTTEFASQWTTQMGFPVISVAEFNSTTLKLTQSRYEANKDAVEKEKYRHPKYGFKWDIPLWYQEGDKKEIKRTWLRRDEPLYLHVSDAGAPFVVNADRYGFYRQNHDANGWKKIIKQLKDNHEVYSPRTRNAIISDAFAAAATDAIEYETVFELLNYAEKETEYLPLEIAMSGISSILKYFGTEPEAKPAQTYMMNILKPMYEKSSIDFIANNYRNDKLFFQINLQKDVIDMFCALGSQDCRKKYKKLFDDEVMNKCRDGQAATECVRIAAPLRSSVYCYGVKEGGDYASDKVMELYTAETLALEKDFLRLALGCHKDVTALKGLLLRALDRNSSFVRMQDIPSAFNDVAANPIGGEFIFNFLIERWPDIIESIGTKHTYVEKVIPACTSGIRSQQQIDQLKNLQKNGMNARQFGAFDKAIERAQNRVDWIKKHFQKLAAFFKKATL.

The Cytoplasmic portion of the chain corresponds to 2 to 17 (TSQGRTRTLLNLTPIR). A helical; Signal-anchor for type II membrane protein transmembrane segment spans residues 18 to 39 (LIVALFLVAAAVGLSIGLTYYF). At 40–972 (TRKAFDTSEK…LAAFFKKATL (933 aa)) the chain is on the extracellular side. A compositionally biased stretch (basic and acidic residues) spans 47 to 62 (SEKPGKDDTGGKDKDN). Positions 47-66 (SEKPGKDDTGGKDKDNSPSA) are disordered. The N-linked (GlcNAc...) asparagine glycan is linked to Asn99. Glu208 contacts substrate. An N-linked (GlcNAc...) asparagine glycan is attached at Asn227. 343–347 (GAMEN) contributes to the substrate binding site. Zn(2+) is bound at residue His379. The Proton acceptor role is filled by Glu380. His383 and Glu402 together coordinate Zn(2+). N-linked (GlcNAc...) asparagine glycosylation is present at Asn549. Intrachain disulfides connect Cys759–Cys766 and Cys804–Cys840. N-linked (GlcNAc...) asparagine glycosylation occurs at Asn858.

This sequence belongs to the peptidase M1 family. Requires Zn(2+) as cofactor.

The protein localises to the membrane. The catalysed reaction is Release of an N-terminal amino acid, Xaa-|-Yaa- from a peptide, amide or arylamide. Xaa is preferably Ala, but may be most amino acids including Pro (slow action). When a terminal hydrophobic residue is followed by a prolyl residue, the two may be released as an intact Xaa-Pro dipeptide.. In Haemonchus contortus (Barber pole worm), this protein is Aminopeptidase N.